The chain runs to 76 residues: DNA-directed RNA polymerase subunit omega (76 aa).

The protein belongs to the RNA polymerase subunit omega family. In cyanobacteria the RNAP catalytic core is composed of 2 alpha, 1 beta, 1 beta', 1 gamma and 1 omega subunit. When a sigma factor is associated with the core the holoenzyme is formed, which can initiate transcription.

It catalyses the reaction RNA(n) + a ribonucleoside 5'-triphosphate = RNA(n+1) + diphosphate. Its function is as follows. Promotes RNA polymerase assembly. Latches the N- and C-terminal regions of the beta' subunit thereby facilitating its interaction with the beta and alpha subunits. The protein is DNA-directed RNA polymerase subunit omega of Synechococcus elongatus (strain ATCC 33912 / PCC 7942 / FACHB-805) (Anacystis nidulans R2).